The following is a 490-amino-acid chain: Scarecrow-like transcription factor PAT1 (490 aa).

In terms of domain architecture, GRAS spans 110–490 (TLEAISRRDL…RDLVASCAWK (381 aa)). Residues 117-178 (RDLRADLVSC…AQLASSGSSI (62 aa)) are leucine repeat I (LRI). Residues 197 to 262 (MHILYEVCPY…GGPPRIRITG (66 aa)) are VHIID. The VHIID signature appears at 228-232 (VHIID). Positions 278–310 (IVGNRLAKLAKQFNVPFEFNSVSVSVSEVKPKN) are leucine repeat II (LRII). A PFYRE region spans residues 319–413 (LAVNFAFVLH…QHCLARDVVN (95 aa)). Residues 416 to 490 (ACEGADRVER…RDLVASCAWK (75 aa)) are SAW.

This sequence belongs to the GRAS family.

It is found in the cytoplasm. Functionally, probable transcription factor involved in phytochrome A (phyA) signal transduction. The sequence is that of Scarecrow-like transcription factor PAT1 (PAT1) from Arabidopsis thaliana (Mouse-ear cress).